The following is a 469-amino-acid chain: 3-isopropylmalate dehydratase large subunit (469 aa).

Residues cysteine 347, cysteine 410, and cysteine 413 each contribute to the [4Fe-4S] cluster site.

Belongs to the aconitase/IPM isomerase family. LeuC type 1 subfamily. In terms of assembly, heterodimer of LeuC and LeuD. Requires [4Fe-4S] cluster as cofactor.

The catalysed reaction is (2R,3S)-3-isopropylmalate = (2S)-2-isopropylmalate. The protein operates within amino-acid biosynthesis; L-leucine biosynthesis; L-leucine from 3-methyl-2-oxobutanoate: step 2/4. In terms of biological role, catalyzes the isomerization between 2-isopropylmalate and 3-isopropylmalate, via the formation of 2-isopropylmaleate. This Burkholderia pseudomallei (strain 1106a) protein is 3-isopropylmalate dehydratase large subunit.